We begin with the raw amino-acid sequence, 396 residues long: Elongation factor Tu (396 aa).

The 197-residue stretch at 10–206 (KPHVNVGTIG…ALDSYIPEPV (197 aa)) folds into the tr-type G domain. The tract at residues 19–26 (GHIDHGKT) is G1. Residue 19 to 26 (GHIDHGKT) participates in GTP binding. Position 26 (threonine 26) interacts with Mg(2+). Positions 60-64 (TKTVT) are G2. The tract at residues 83 to 86 (DCPG) is G3. Residues 83–87 (DCPGH) and 138–141 (NKCD) each bind GTP. The tract at residues 138-141 (NKCD) is G4. The interval 176–178 (ASL) is G5.

This sequence belongs to the TRAFAC class translation factor GTPase superfamily. Classic translation factor GTPase family. EF-Tu/EF-1A subfamily. Monomer.

Its subcellular location is the cytoplasm. It catalyses the reaction GTP + H2O = GDP + phosphate + H(+). Functionally, GTP hydrolase that promotes the GTP-dependent binding of aminoacyl-tRNA to the A-site of ribosomes during protein biosynthesis. This Sorangium cellulosum (strain So ce56) (Polyangium cellulosum (strain So ce56)) protein is Elongation factor Tu.